The chain runs to 661 residues: Translation factor GUF1 homolog, mitochondrial (661 aa).

The tr-type G domain maps to 59–242; sequence ENIRNFCIVA…AIIDRIPSPK (184 aa). Residues 68–75, 135–139, and 189–192 each bind GTP; these read AHVDHGKS, DTPGH, and NKVD.

The protein belongs to the TRAFAC class translation factor GTPase superfamily. Classic translation factor GTPase family. LepA subfamily.

Its subcellular location is the mitochondrion inner membrane. The catalysed reaction is GTP + H2O = GDP + phosphate + H(+). Promotes mitochondrial protein synthesis. May act as a fidelity factor of the translation reaction, by catalyzing a one-codon backward translocation of tRNAs on improperly translocated ribosomes. Binds to mitochondrial ribosomes in a GTP-dependent manner. The protein is Translation factor GUF1 homolog, mitochondrial of Ixodes scapularis (Black-legged tick).